The sequence spans 579 residues: Alpha-glucosidase (579 aa).

Residue Asp-212 is the Nucleophile of the active site. Catalysis depends on Glu-269, which acts as the Proton donor.

It belongs to the glycosyl hydrolase 13 family.

The catalysed reaction is Hydrolysis of terminal, non-reducing (1-&gt;4)-linked alpha-D-glucose residues with release of alpha-D-glucose.. The chain is Alpha-glucosidase (mal1) from Schizosaccharomyces pombe (strain 972 / ATCC 24843) (Fission yeast).